The chain runs to 663 residues: MAU2 chromatid cohesion factor homolog (663 aa).

2 TPR repeats span residues 455–488 and 495–528; these read GGFYYVQGLHAFHKNSFHEAKRFLRETLKMANAE and SCSLVLLSHVFLSIGNSKESMNMVTPAMQLASKI.

The protein belongs to the SCC4/mau-2 family. Interacts with Nipped-B to form the cohesin loading complex.

It is found in the nucleus. The protein resides in the nucleoplasm. In terms of biological role, required for association of the cohesin complex with chromatin during interphase. Plays a role in sister chromatid cohesion and normal progression through prometaphase. The polypeptide is MAU2 chromatid cohesion factor homolog (Drosophila willistoni (Fruit fly)).